The primary structure comprises 308 residues: MARDKDLSPYLDFDRETWRHLRMSMPQVLTEQEVVELRGIGENIDLDEVAEVYLPLSRLIHLQVHARQELTQATETFLGEKAPHIPFVIGVAGSVAVGKSTTARLLQVLLQRWDEHPRVDLVTTDGFLHPTEILKKRGILDRKGFPESYDQRALLRFVTDVKAGKAHVKAPVYSHTLYDRVENECVTVSRPDILIVEGLNVLQTGPTLSVSDLFDFSVYVDAALEDIERWYIDRFLKLRQLAFRAPNAHFSHYADMGDRAATDEARRIWQTINLPNLVEHILPTRVRASLVLCKGADHKVARVRMRKI.

Residue Gly-93–Ser-100 coordinates ATP.

It belongs to the prokaryotic pantothenate kinase family.

The protein resides in the cytoplasm. The enzyme catalyses (R)-pantothenate + ATP = (R)-4'-phosphopantothenate + ADP + H(+). It functions in the pathway cofactor biosynthesis; coenzyme A biosynthesis; CoA from (R)-pantothenate: step 1/5. This is Pantothenate kinase from Corynebacterium diphtheriae (strain ATCC 700971 / NCTC 13129 / Biotype gravis).